Reading from the N-terminus, the 389-residue chain is MQQHLSKTAYVYSDKLLQYRFHDQHPFNQMRLKLTTELLLNANLLSPEQIVQPRIATDDELMLIHKYDYVEAIKHASHGIISEDEAMKYGLNDEENGQFKHMHRHSATIVGGALTLADLIMSGKALNGCHLGGGLHHAQPGRASGFCIYNDIAITAQYLAKEYNQRVLIIDTDAHHGDGTQWSFYADNHVTTYSIHETGKFLFPGSGHYTERGEDIGYGHTVNVPLEPYTEDSSFLECFKLTVEPVVKSFKPDIILSVNGVDIHYRDPLTHLNCTLHSLYEIPYFVKYLADTYTNGKIIMFGGGGYNIWRVVPRAWSHVFLSLIDQPIQSGYLPLEWINKWKHYSSELLPKRWEDRLNDYTYVPRTKEISEKNKKLALHIASWYESTRQ.

The protein belongs to the histone deacetylase family.

The protein operates within ketone degradation; acetoin degradation. Its function is as follows. Role in growth on acetoin or butanediol. Involved in the breakdown of these compounds used as a carbon source. The protein is Acetoin utilization protein AcuC (acuC) of Staphylococcus aureus (strain MRSA252).